The sequence spans 268 residues: Tryptophan synthase alpha chain (268 aa).

Residues glutamate 49 and aspartate 60 each act as proton acceptor in the active site.

This sequence belongs to the TrpA family. In terms of assembly, tetramer of two alpha and two beta chains.

The catalysed reaction is (1S,2R)-1-C-(indol-3-yl)glycerol 3-phosphate + L-serine = D-glyceraldehyde 3-phosphate + L-tryptophan + H2O. It participates in amino-acid biosynthesis; L-tryptophan biosynthesis; L-tryptophan from chorismate: step 5/5. Functionally, the alpha subunit is responsible for the aldol cleavage of indoleglycerol phosphate to indole and glyceraldehyde 3-phosphate. The sequence is that of Tryptophan synthase alpha chain from Salmonella typhimurium (strain LT2 / SGSC1412 / ATCC 700720).